Here is a 741-residue protein sequence, read N- to C-terminus: Chromosome transmission fidelity protein 18 (741 aa).

Position 183-190 (183-190 (GPPGIGKT)) interacts with ATP.

This sequence belongs to the activator 1 small subunits family. CTF18 subfamily. In terms of assembly, component of the CTF18-RFC complex, which consists of CTF18, CTF8, DCC1, RFC2, RFC3, RFC4 and RFC5. CTF18 interacts with ECO1.

The protein resides in the nucleus. In terms of biological role, essential for the fidelity of chromosome transmission. Required for the DNA replication block checkpoint. Component of the RFC-like complex CTF18-RFC which is required for efficient establishment of chromosome cohesion during S-phase and may load or unload POL30/PCNA. During a clamp loading circle, the RFC:clamp complex binds to DNA and the recognition of the double-stranded/single-stranded junction stimulates ATP hydrolysis by RFC. The complex presumably provides bipartite ATP sites in which one subunit supplies a catalytic site for hydrolysis of ATP bound to the neighboring subunit. Dissociation of RFC from the clamp leaves the clamp encircling DNA. In Saccharomyces cerevisiae (strain ATCC 204508 / S288c) (Baker's yeast), this protein is Chromosome transmission fidelity protein 18 (CTF18).